Reading from the N-terminus, the 130-residue chain is Small ribosomal subunit protein uS9 (130 aa).

Belongs to the universal ribosomal protein uS9 family.

The chain is Small ribosomal subunit protein uS9 from Bordetella parapertussis (strain 12822 / ATCC BAA-587 / NCTC 13253).